The following is a 36-amino-acid chain: Alpha-amylase inhibitor AI-3688 (36 aa).

A disulfide bridge links Cys-9 with Cys-25.

Inhibits mammalian alpha-amylases specifically but has no action on plant and microbial alpha-amylases. This is Alpha-amylase inhibitor AI-3688 from Kitasatospora aureofaciens (Streptomyces aureofaciens).